Reading from the N-terminus, the 163-residue chain is Leptin (163 aa).

Positions 1–18 (MCWRPLCRLWSYLVYVQA) are cleaved as a signal peptide. Residues Cys113 and Cys163 are joined by a disulfide bond.

It belongs to the leptin family. As to expression, not exclusively localized in adipose tissue but is also expressed in liver.

The protein resides in the secreted. Its function is as follows. Key player in the regulation of energy balance and body weight control. Once released into the circulation, has central and peripheral effects by binding LEPR, found in many tissues, which results in the activation of several major signaling pathways. The protein is Leptin (LEP) of Gallus gallus (Chicken).